The chain runs to 224 residues: Ras-related protein Rab-11C (224 aa).

Residue 17–24 participates in GTP binding; the sequence is GDSAVGKS. The Effector region motif lies at 39-47; that stretch reads TKATIGVDF. Residues 65 to 69 and 123 to 126 contribute to the GTP site; these read DTAGQ and NKSD. The disordered stretch occupies residues 194 to 224; sequence QGKKLTPLSDPAPQLTANTTSTHQEKKSGCC. Residues cysteine 223 and cysteine 224 are each lipidated (S-geranylgeranyl cysteine).

It belongs to the small GTPase superfamily. Rab family.

It is found in the membrane. The polypeptide is Ras-related protein Rab-11C (rab11C) (Dictyostelium discoideum (Social amoeba)).